We begin with the raw amino-acid sequence, 292 residues long: Homoserine kinase (292 aa).

Position 84–94 (84–94 (PISRGLGSSSA)) interacts with ATP.

It belongs to the GHMP kinase family. Homoserine kinase subfamily.

It is found in the cytoplasm. The catalysed reaction is L-homoserine + ATP = O-phospho-L-homoserine + ADP + H(+). Its pathway is amino-acid biosynthesis; L-threonine biosynthesis; L-threonine from L-aspartate: step 4/5. Functionally, catalyzes the ATP-dependent phosphorylation of L-homoserine to L-homoserine phosphate. This chain is Homoserine kinase, found in Sulfurovum sp. (strain NBC37-1).